Here is a 484-residue protein sequence, read N- to C-terminus: MEFRGSGATAVEQHLLQSETPGKNGLQATSSDQVGRTLRWFTTVVLNAAFLGMGVSAAVLGPTFPDLARNVNRNISSLSEIFVGRALGYLGGSVVGGVLFDCMNHFLLLGLSHLLTAAGLYLTPFCKTAALLTAMMSITGVSFGVLDTGGNVLILDLWGDKGAPHIQALHFSFALGAFLAPLLAKLAWGTTASAQNHTEPQLDRSALNRSFEAASDSVLAVPDDMNLLWAYASIGTYVLVLSVFLFAPFFKKRSKQKKSAASAQGARRAKYHRALLCLLFLFFFFYVGAEVTYGSYVFSFATTHVGMEESEAAGLNSIFWGTFAACRGLAIFFATLLQPGTMMVLCNIGSLASSFFLVLFDKSPLCLWIASSVYGASMAATFPSGISWIEQYTTLTGKSAAFILVGAALGLMATPALSGILQGHYPDLPVILYMCLGSAVLTTVLFPVMYKVATLPLDRKQEKSINSEGQKILLSSSRLIKEAK.

At S6 the chain carries Phosphoserine. The next 12 membrane-spanning stretches (helical) occupy residues 40-60 (WFTT…AAVL), 80-100 (EIFV…GVLF), 106-126 (FLLL…TPFC), 135-155 (MMSI…VLIL), 168-188 (ALHF…KLAW), 227-247 (LLWA…FLFA), 274-294 (ALLC…VTYG), 317-337 (SIFW…ATLL), 340-360 (GTMM…LVLF), 366-386 (CLWI…PSGI), 401-421 (AFIL…SGIL), and 428-448 (LPVI…LFPV).

The protein belongs to the major facilitator superfamily. Expressed in brain, liver, lung, and kidney. In kidney expressed in cortex and inner medulla, in ascending thin limbs (ATLs) and lower descending thin limbs (DTLs). Primarily expressed in the proximal tubules of the kidney.

The protein localises to the apical cell membrane. May function as a sodium-dependent glucose transporter. Potential channels for urea in the inner medulla of kidney. The chain is Sodium-dependent glucose transporter 1 from Rattus norvegicus (Rat).